The chain runs to 1828 residues: InaD-like protein (1828 aa).

One can recognise an L27 domain in the interval P5–S65. 3 PDZ domains span residues Y134 to P221, D248 to P328, and G365 to K453. 2 positions are modified to phosphoserine: S459 and S522. A PDZ 4 domain is found at D553–L639. S645 bears the Phosphoserine mark. PDZ domains are found at residues I686–K758 and I1070–S1162. The interval I1168 to E1220 is disordered. Residues T1196–K1208 are compositionally biased toward pro residues. At S1211 the chain carries Phosphoserine. In terms of domain architecture, PDZ 7 spans I1241–E1324. The tract at residues A1333–L1362 is disordered. The segment covering L1345–V1354 has biased composition (polar residues). PDZ domains lie at I1464–E1547 and P1560–R1642. T1535 carries the post-translational modification Phosphothreonine. Positions S1645–H1668 are enriched in polar residues. The disordered stretch occupies residues S1645–P1669. The 87-residue stretch at T1703–T1789 folds into the PDZ 10 domain. The interval Y1805–G1828 is disordered.

Forms a ternary complex with PALS1 and CRB1. Component of a complex whose core is composed of ARHGAP17, AMOT, PALS1, INADL/PATJ and PARD3/PAR3. Forms a heterotrimeric complex composed of MMP5, LIN7B and PATJ; the N-terminal L27 domain of PALS1 interacts with the L27 domain of PATJ and the C-terminal L27 domain of PALS1 interacts with the L27 domain of LIN7B. Component of a complex composed of CRB3, PALS1 and PATJ. As part of the Crumbs complex; interacts with WWP1, the interaction is enhanced by AMOTL2 and facilitates WWP1 localization to the plasma membrane. The Crumbs complex promotes monoubiquitination of AMOTL2 by WWP1, which activates the Hippo signaling pathway. Interacts (via N-terminus) with PALS1/PALS (via PDZ domain). Interacts with TJP3/ZO-3 and CLDN1/claudin-1. Interacts with ASIC3, KCNJ10, KCNJ15, GRIN2A, GRIN2B, GRIN2C, GRIN2D, NLGN2, and HTR2A. Interacts with MPP7. Directly interacts with HTR4. Interacts (via PDZ domain 8) with WWC1 (via the ADDV motif). Interacts with SLC6A4. Interacts (via C-terminus) with ARHGEF18. Interacts with NPHP1. Interacts with PARD3/PAR3. Interacts (via PDZ1-6 domains) with TJP1/ZO1; the interaction is required for attachment and extension of TJP1/ZO1 condensates along the apical cell interface.

It is found in the cell junction. The protein localises to the tight junction. It localises to the apical cell membrane. Its subcellular location is the cytoplasm. The protein resides in the perinuclear region. Its function is as follows. Scaffolding protein that facilitates the localization of proteins to the cell membrane. Required for the correct formation of tight junctions and epithelial apico-basal polarity. Acts (via its L27 domain) as an apical connector and elongation factor for multistranded TJP1/ZO1 condensates that form a tight junction belt, thereby required for the formation of the tight junction-mediated cell barrier. Positively regulates epithelial cell microtubule elongation and cell migration, possibly via facilitating localization of PRKCI/aPKC and PAR3D/PAR3 at the leading edge of migrating cells. Plays a role in the correct reorientation of the microtubule-organizing center during epithelial migration. May regulate the surface expression and/or function of ASIC3 in sensory neurons. May recruit ARHGEF18 to apical cell-cell boundaries. The protein is InaD-like protein of Canis lupus familiaris (Dog).